A 592-amino-acid chain; its full sequence is MDPNSILLSPQPQICSHLAEACTEGERSSSPPELDRDSPFPWSQVPSSSPTDPEWFGDEHIQAKRARVETIVRGMCLSPNPLVPGNAQAGVSPRCPKKARERKRKQNLPTPQGLLMPAPAWDQGNRKGGPRVREQLHLLKQQLRHLQEHILQAAKPRDTAQGPGGCGTGKGPLSAKQGNGCGPRPWVVDGDHQQGTSKDLSGAEKHQESEKPSFLPSGAPASLEILRKELTRAVSQAVDSVLQKVLLDPPGHLTQLGRSFQGQVAEGRSEPSPPVGGACKDPLALAALPRRVQLQAGVPVGNLSLAKRLDSPRYPIPPRMTPKPCQDPPANFPLTAPSHIQENQILSQLLGHRYNNGHWSSSPPQDSSSQRHPSSEPALRPWRTTKPQPLVLSQQQCPLPFTSAHLESLPLLPSVKMEQRGLHAVMEALPFSLLHIQEGLNPGHLKKAKLMFFFTRYPSSNLLKVYFPDVQFNRCITSQMIKWFSNFREFYYIQMEKSARQAISDGVTNPKMLVVLRNSELFQALNMHYNKGNDFEVPDCFLEIASLTLQEFFRAVSAGRDSDPSWKKPIYKIISKLDSDIPEIFKSSSYPQ.

5 disordered regions span residues 20–56 (EACTEGERSSSPPELDRDSPFPWSQVPSSSPTDPEWF), 85–129 (GNAQ…RKGG), 155–218 (KPRD…LPSG), 308–336 (RLDSPRYPIPPRMTPKPCQDPPANFPLTA), and 353–382 (RYNNGHWSSSPPQDSSSQRHPSSEPALRPW). The span at 95–106 (CPKKARERKRKQ) shows a compositional bias: basic residues. Residues 201-211 (SGAEKHQESEK) show a composition bias toward basic and acidic residues. The segment covering 314–331 (YPIPPRMTPKPCQDPPAN) has biased composition (pro residues). Residues 360-377 (SSSPPQDSSSQRHPSSEP) show a composition bias toward low complexity. The region spanning 437–495 (QEGLNPGHLKKAKLMFFFTRYPSSNLLKVYFPDVQFNRCITSQMIKWFSNFREFYYIQM) is the Prospero-type homeo domain. The interval 437-592 (QEGLNPGHLK…EIFKSSSYPQ (156 aa)) is homeo-Prospero. The Prospero domain maps to 496-592 (EKSARQAISD…EIFKSSSYPQ (97 aa)).

Belongs to the Prospero homeodomain family.

Its subcellular location is the nucleus. In terms of biological role, transcription regulator. Does not seem to be essential for embryonic development and postnatal survival. In Homo sapiens (Human), this protein is Prospero homeobox protein 2 (PROX2).